The sequence spans 246 residues: 3-deoxy-manno-octulosonate cytidylyltransferase (246 aa).

It belongs to the KdsB family.

The protein localises to the cytoplasm. The catalysed reaction is 3-deoxy-alpha-D-manno-oct-2-ulosonate + CTP = CMP-3-deoxy-beta-D-manno-octulosonate + diphosphate. Its pathway is nucleotide-sugar biosynthesis; CMP-3-deoxy-D-manno-octulosonate biosynthesis; CMP-3-deoxy-D-manno-octulosonate from 3-deoxy-D-manno-octulosonate and CTP: step 1/1. It participates in bacterial outer membrane biogenesis; lipopolysaccharide biosynthesis. Activates KDO (a required 8-carbon sugar) for incorporation into bacterial lipopolysaccharide in Gram-negative bacteria. This chain is 3-deoxy-manno-octulosonate cytidylyltransferase, found in Rickettsia africae (strain ESF-5).